The following is a 626-amino-acid chain: DNA mismatch repair protein MutL (626 aa).

Residues 352-399 are disordered; it reads QPPSPSFTSRPSSAGYASGSWHPAVSSPRTEWSPQTAHPAHRPLDLGA. Over residues 378-387 the composition is skewed to polar residues; that stretch reads SPRTEWSPQT.

The protein belongs to the DNA mismatch repair MutL/HexB family.

This protein is involved in the repair of mismatches in DNA. It is required for dam-dependent methyl-directed DNA mismatch repair. May act as a 'molecular matchmaker', a protein that promotes the formation of a stable complex between two or more DNA-binding proteins in an ATP-dependent manner without itself being part of a final effector complex. This Brucella anthropi (strain ATCC 49188 / DSM 6882 / CCUG 24695 / JCM 21032 / LMG 3331 / NBRC 15819 / NCTC 12168 / Alc 37) (Ochrobactrum anthropi) protein is DNA mismatch repair protein MutL.